We begin with the raw amino-acid sequence, 214 residues long: tRNA (guanine-N(7)-)-methyltransferase (214 aa).

Residues E43, E68, D95, and D117 each contribute to the S-adenosyl-L-methionine site. The active site involves D117. Substrate-binding positions include K121, D153, and 191 to 194 (TEYE).

It belongs to the class I-like SAM-binding methyltransferase superfamily. TrmB family.

The catalysed reaction is guanosine(46) in tRNA + S-adenosyl-L-methionine = N(7)-methylguanosine(46) in tRNA + S-adenosyl-L-homocysteine. Its pathway is tRNA modification; N(7)-methylguanine-tRNA biosynthesis. Catalyzes the formation of N(7)-methylguanine at position 46 (m7G46) in tRNA. The protein is tRNA (guanine-N(7)-)-methyltransferase of Brevibacillus brevis (strain 47 / JCM 6285 / NBRC 100599).